The chain runs to 428 residues: Diaminopimelate decarboxylase (428 aa).

Residue Lys64 is modified to N6-(pyridoxal phosphate)lysine. Pyridoxal 5'-phosphate is bound by residues Gly239 and 281–284 (EPGR). The substrate site is built by Arg284, Arg319, and Tyr323. Cys350 functions as the Proton donor in the catalytic mechanism. Glu351 and Tyr379 together coordinate substrate. Tyr379 serves as a coordination point for pyridoxal 5'-phosphate.

The protein belongs to the Orn/Lys/Arg decarboxylase class-II family. LysA subfamily. Homodimer. Pyridoxal 5'-phosphate is required as a cofactor.

The catalysed reaction is meso-2,6-diaminopimelate + H(+) = L-lysine + CO2. It participates in amino-acid biosynthesis; L-lysine biosynthesis via DAP pathway; L-lysine from DL-2,6-diaminopimelate: step 1/1. Its function is as follows. Specifically catalyzes the decarboxylation of meso-diaminopimelate (meso-DAP) to L-lysine. The protein is Diaminopimelate decarboxylase of Methanothermobacter thermautotrophicus (strain ATCC 29096 / DSM 1053 / JCM 10044 / NBRC 100330 / Delta H) (Methanobacterium thermoautotrophicum).